The primary structure comprises 475 residues: Sulfate adenylyltransferase subunit 1 (475 aa).

Residues 25-239 (KSLLRFLTCG…EVLETVEIQR (215 aa)) form the tr-type G domain. Residues 34–41 (GSVDDGKS) form a G1 region. A GTP-binding site is contributed by 34-41 (GSVDDGKS). The segment at 92–96 (GITID) is G2. A G3 region spans residues 113 to 116 (DTPG). GTP is bound by residues 113-117 (DTPGH) and 168-171 (NKMD). The G4 stretch occupies residues 168–171 (NKMD). The interval 206 to 208 (SAL) is G5.

Belongs to the TRAFAC class translation factor GTPase superfamily. Classic translation factor GTPase family. CysN/NodQ subfamily. Heterodimer composed of CysD, the smaller subunit, and CysN.

It carries out the reaction sulfate + ATP + H(+) = adenosine 5'-phosphosulfate + diphosphate. The protein operates within sulfur metabolism; hydrogen sulfide biosynthesis; sulfite from sulfate: step 1/3. Its function is as follows. With CysD forms the ATP sulfurylase (ATPS) that catalyzes the adenylation of sulfate producing adenosine 5'-phosphosulfate (APS) and diphosphate, the first enzymatic step in sulfur assimilation pathway. APS synthesis involves the formation of a high-energy phosphoric-sulfuric acid anhydride bond driven by GTP hydrolysis by CysN coupled to ATP hydrolysis by CysD. This is Sulfate adenylyltransferase subunit 1 from Escherichia coli (strain SE11).